The chain runs to 283 residues: Aquaporin PIP2-5 (283 aa).

2 helical membrane-spanning segments follow: residues 37-57 (AVIA…ATVI) and 74-94 (CGGV…FILV). The NPA 1 motif lies at 106–108 (NPA). Helical transmembrane passes span 125–145 (ILYI…VKGF), 167–187 (GTGL…VFSA), and 199–219 (VPVL…LATI). The NPA 2 motif lies at 227 to 229 (NPA). The helical transmembrane segment at 249–269 (IFWVGPFIGAAIAALYHQIVL) threads the bilayer.

This sequence belongs to the MIP/aquaporin (TC 1.A.8) family. PIP (TC 1.A.8.11) subfamily. In terms of tissue distribution, expressed in roots.

It is found in the cell membrane. Functionally, water channel required to facilitate the transport of water across cell membrane. May play a role in root water uptake. This is Aquaporin PIP2-5 (PIP2-5) from Oryza sativa subsp. japonica (Rice).